Here is a 70-residue protein sequence, read N- to C-terminus: MFTLKKSLLLIFFLGTISLSLCEKERDADDDEVEVIKQEEKRGFLNTAMNTVTNLAGTLMDKAKCKIRGC.

The N-terminal stretch at 1 to 22 is a signal peptide; the sequence is MFTLKKSLLLIFFLGTISLSLC. The propeptide at 23 to 40 is removed in mature form; sequence EKERDADDDEVEVIKQEE. A disulfide bond links cysteine 65 and cysteine 70.

It belongs to the frog skin active peptide (FSAP) family. Ranatuerin subfamily. As to expression, expressed by the skin glands.

Its subcellular location is the secreted. Functionally, antimicrobial peptide. Weakly active against P.faecalis X29. Not active against fungi. Shows very weak hemolytic activity against human erythrocytes. This is Ranatuerin-2SN1 from Sylvirana spinulosa (Fine-spined frog).